Consider the following 53-residue polypeptide: Metallothionein (53 aa).

It belongs to the metallothionein superfamily. Type 14 family.

Functionally, this protein complexes cadmium, zinc and copper. This is Metallothionein from Synechococcus sp.